The sequence spans 207 residues: Cytochrome c biogenesis ATP-binding export protein CcmA (207 aa).

In terms of domain architecture, ABC transporter spans 4–207 (LEARELLCER…RISLTQTGAA (204 aa)). Residue 36–43 (GSNGAGKT) coordinates ATP.

This sequence belongs to the ABC transporter superfamily. CcmA exporter (TC 3.A.1.107) family. As to quaternary structure, the complex is composed of two ATP-binding proteins (CcmA) and two transmembrane proteins (CcmB).

It localises to the cell inner membrane. It catalyses the reaction heme b(in) + ATP + H2O = heme b(out) + ADP + phosphate + H(+). Functionally, part of the ABC transporter complex CcmAB involved in the biogenesis of c-type cytochromes; once thought to export heme, this seems not to be the case, but its exact role is uncertain. Responsible for energy coupling to the transport system. This chain is Cytochrome c biogenesis ATP-binding export protein CcmA, found in Escherichia coli (strain UTI89 / UPEC).